The primary structure comprises 398 residues: Acetate kinase (398 aa).

Asn8 lines the Mg(2+) pocket. Lys15 lines the ATP pocket. Arg89 is a binding site for substrate. The active-site Proton donor/acceptor is Asp146. ATP-binding positions include 206-210 (HIGNG), 281-283 (DLR), and 329-333 (GVGEN). Glu383 lines the Mg(2+) pocket.

It belongs to the acetokinase family. Homodimer. Requires Mg(2+) as cofactor. Mn(2+) serves as cofactor.

The protein localises to the cytoplasm. It catalyses the reaction acetate + ATP = acetyl phosphate + ADP. It participates in metabolic intermediate biosynthesis; acetyl-CoA biosynthesis; acetyl-CoA from acetate: step 1/2. Catalyzes the formation of acetyl phosphate from acetate and ATP. Can also catalyze the reverse reaction. The sequence is that of Acetate kinase from Macrococcus caseolyticus (strain JCSC5402) (Macrococcoides caseolyticum).